Consider the following 281-residue polypeptide: Nhr-229 coiled coil domain containing nccd-1 (281 aa).

This chain is Nhr-229 coiled coil domain containing nccd-1, found in Caenorhabditis elegans.